The following is a 651-amino-acid chain: Nucleolin (651 aa).

Positions 1–11 (MVKLAKGAKTQ) are enriched in low complexity. Residues 1-230 (MVKLAKGAKT…AKKTKTDTAS (230 aa)) form a disordered region. Over residues 26–45 (EDSEEEEDMEEDDSSDEEVE) the composition is skewed to acidic residues. Over residues 54 to 79 (KKTATPAKATPGKAATPGKKGATPAK) the composition is skewed to low complexity. The span at 89 to 101 (SEEEEDDSDEEAE) shows a compositional bias: acidic residues. Over residues 106–116 (IKNKPVAKKAV) the composition is skewed to basic residues. 3 stretches are compositionally biased toward acidic residues: residues 122 to 134 (SEED…ESEE), 155 to 168 (SEEE…DEPM), and 183 to 204 (AEED…EEEQ). The residue at position 155 (Ser155) is a Phosphoserine. The segment covering 219 to 228 (PEAKKTKTDT) has biased composition (basic and acidic residues). RRM domains follow at residues 233–309 (LSIF…KAMA), 325–399 (RTLF…FTGE), 415–488 (KVLV…FSQG), and 503–578 (KTLF…FAKP). The tract at residues 574–651 (DFAKPKGDSQ…GQGKKMRFDD (78 aa)) is disordered. Positions 585–644 (GGRGGFGRGGGFRGGRGGRGGGGGRGFGGRGGGRGRGGFGGRGGGGFRGGQGGGFRGGQG) are enriched in gly residues.

Its subcellular location is the nucleus. The protein resides in the nucleolus. In terms of biological role, nucleolin is the major nucleolar protein of growing eukaryotic cells. It is found associated with intranucleolar chromatin and pre-ribosomal particles. It induces chromatin decondensation by binding to histone H1. It is thought to play a role in pre-rRNA transcription and ribosome assembly. The sequence is that of Nucleolin (ncl) from Xenopus laevis (African clawed frog).